The following is a 348-amino-acid chain: Nicotinate-nucleotide--dimethylbenzimidazole phosphoribosyltransferase (348 aa).

The active-site Proton acceptor is the Glu316.

It belongs to the CobT family.

It carries out the reaction 5,6-dimethylbenzimidazole + nicotinate beta-D-ribonucleotide = alpha-ribazole 5'-phosphate + nicotinate + H(+). It functions in the pathway nucleoside biosynthesis; alpha-ribazole biosynthesis; alpha-ribazole from 5,6-dimethylbenzimidazole: step 1/2. Its function is as follows. Catalyzes the synthesis of alpha-ribazole-5'-phosphate from nicotinate mononucleotide (NAMN) and 5,6-dimethylbenzimidazole (DMB). The polypeptide is Nicotinate-nucleotide--dimethylbenzimidazole phosphoribosyltransferase (Xanthomonas euvesicatoria pv. vesicatoria (strain 85-10) (Xanthomonas campestris pv. vesicatoria)).